The following is a 2472-amino-acid chain: Spectrin alpha chain, non-erythrocytic 1 (2472 aa).

At methionine 1 the chain carries N-acetylmethionine. Spectrin repeat units follow at residues 45-146 (RFQF…IKLL), 150-251 (KLVQ…QGKL), 256-358 (EVQR…ARLN), 361-465 (YRLQ…QYEQ), 468-570 (DLQL…AQLA), 574-676 (HLQQ…KLRE), 679-781 (QQQQ…QKLA), 785-888 (RLQQ…DLED), and 891-969 (QAQQ…ETGK). Serine 587 is modified (phosphoserine). Lysine 637 carries the N6-acetyllysine modification. Lysine 803 carries the post-translational modification N6-acetyllysine. Phosphoserine occurs at positions 924, 982, 999, 1029, 1031, and 1041. Residues 967–1026 (TGKELVLALYDYQEKSPREVTMKKGDILTLLNSTNKDWWKVEVNDRQGFVPAAYVKKLDP) enclose the SH3 domain. The Spectrin 10 repeat unit spans residues 1096–1166 (LFREANELQQ…LESEGLMAEE (71 aa)). The residue at position 1176 (tyrosine 1176) is a Phosphotyrosine. Phosphoserine is present on residues serine 1190, serine 1207, serine 1217, serine 1291, serine 1306, serine 1323, and serine 1338. The stretch at 1233 to 1336 (HEVQRFHRDA…RADQRKAKLG (104 aa)) is one Spectrin 11 repeat. 2 Spectrin repeats span residues 1339-1442 (HDLQ…MMLD) and 1446-1549 (ELQL…KLGE). Lysine 1519 carries the N6-acetyllysine modification. Residues serine 1550, serine 1557, serine 1578, serine 1615, and serine 1647 each carry the phosphoserine modification. 7 Spectrin repeats span residues 1552–1656 (TLQQ…KLKE), 1659–1762 (KQQN…KLNE), 1764–1868 (HRLH…RLEE), 1871–1974 (EYQQ…KLDE), 1978–2081 (FLQF…KLLE), 2092–2194 (LFLT…LELQ), and 2206–2310 (LRQE…NLEQ). At threonine 2020 the chain carries Phosphothreonine. At lysine 2052 the chain carries N6-acetyllysine. EF-hand domains lie at 2323–2358 (EALKEFSMMFKHFDKDKSGRLNHQEFKSCLRSLGYD), 2366–2401 (EPDPEFEAILDTVDPNRDGHVSLQEYMAFMISRETE), and 2404–2439 (KSSEEIESAFRALSSEGKPYVTKEELYQNLTREQAD). Ca(2+) is bound by residues aspartate 2336, aspartate 2338, serine 2340, arginine 2342, glutamate 2347, aspartate 2379, asparagine 2381, aspartate 2383, histidine 2385, and glutamate 2390. The residue at position 2421 (lysine 2421) is an N6-acetyllysine.

The protein belongs to the spectrin family. As to quaternary structure, like erythrocyte spectrin, the spectrin-like proteins are capable of forming dimers which can further associate to tetramers. Interacts (via C-terminal spectrin repeats) with TRPC4. Interacts with CALM and EMD. Interacts with isoform 1 of ACP1. Identified in a complex with ACTN4, CASK, IQGAP1, MAGI2, NPHS1 and SPTBN1. Interacts with SHANK3 (via ANK repeats). Interacts with CLN3; this interaction regulates the fodrin localization at the plasma membrane. Phosphorylation of Tyr-1176 decreases sensitivity to cleavage by calpain in vitro.

Its subcellular location is the cytoplasm. The protein resides in the cytoskeleton. The protein localises to the cell cortex. Functionally, fodrin, which seems to be involved in secretion, interacts with calmodulin in a calcium-dependent manner and is thus candidate for the calcium-dependent movement of the cytoskeleton at the membrane. The polypeptide is Spectrin alpha chain, non-erythrocytic 1 (SPTAN1) (Homo sapiens (Human)).